Here is a 276-residue protein sequence, read N- to C-terminus: ATP synthase subunit a (276 aa).

7 consecutive transmembrane segments (helical) span residues 49 to 69, 109 to 129, 137 to 157, 173 to 193, 203 to 223, 232 to 252, and 253 to 273; these read KPML…FAAA, YLFT…IPFI, SGMV…AGIS, GIRG…NILV, FANM…GEYI, APVG…EMLI, and QFLQ…GAVA.

This sequence belongs to the ATPase A chain family. As to quaternary structure, F-type ATPases have 2 components, CF(1) - the catalytic core - and CF(0) - the membrane proton channel. CF(1) has five subunits: alpha(3), beta(3), gamma(1), delta(1), epsilon(1). CF(0) has three main subunits: a(1), b(2) and c(9-12). The alpha and beta chains form an alternating ring which encloses part of the gamma chain. CF(1) is attached to CF(0) by a central stalk formed by the gamma and epsilon chains, while a peripheral stalk is formed by the delta and b chains.

It is found in the cell membrane. Its function is as follows. Key component of the proton channel; it plays a direct role in the translocation of protons across the membrane. The sequence is that of ATP synthase subunit a from Nocardioides sp. (strain ATCC BAA-499 / JS614).